Here is a 146-residue protein sequence, read N- to C-terminus: Basic phospholipase A2 (146 aa).

Positions methionine 1–serine 21 are cleaved as a signal peptide. Positions isoleucine 22–leucine 27 are excised as a propeptide. 7 cysteine pairs are disulfide-bonded: cysteine 38–cysteine 98, cysteine 54–cysteine 145, cysteine 56–cysteine 72, cysteine 71–cysteine 126, cysteine 78–cysteine 119, cysteine 87–cysteine 112, and cysteine 105–cysteine 117. Residues tyrosine 55, glycine 57, and glycine 59 each coordinate Ca(2+). Histidine 75 is a catalytic residue. Aspartate 76 contributes to the Ca(2+) binding site. The active site involves aspartate 120.

Belongs to the phospholipase A2 family. Group I subfamily. D49 sub-subfamily. Ca(2+) is required as a cofactor. Expressed by the venom gland.

It localises to the secreted. The enzyme catalyses a 1,2-diacyl-sn-glycero-3-phosphocholine + H2O = a 1-acyl-sn-glycero-3-phosphocholine + a fatty acid + H(+). Functionally, snake venom phospholipase A2 (PLA2) that inhibits neuromuscular transmission by blocking acetylcholine release from the nerve termini. PLA2 catalyzes the calcium-dependent hydrolysis of the 2-acyl groups in 3-sn-phosphoglycerides. In Hydrophis hardwickii (Hardwick's spine-bellied seasnake), this protein is Basic phospholipase A2.